The sequence spans 256 residues: Tetraspanin-32 (256 aa).

4 helical membrane-spanning segments follow: residues 15-35 (LITN…VVVI), 61-81 (AFYV…LSTI), 90-110 (LMAA…QVAF), and 203-223 (CTSL…WFAI).

It belongs to the tetraspanin (TM4SF) family. As to expression, expressed exclusively in hematopoietic tissues. Expression detected in spleen, thymus, bone marrow and peripheral blood leukocytes but not in heart, brain, lung, liver, kidney or testis.

It localises to the membrane. In Mus musculus (Mouse), this protein is Tetraspanin-32 (Tspan32).